A 27-amino-acid chain; its full sequence is Conotoxin Lo6/7b (27 aa).

3 disulfides stabilise this stretch: cysteine 2-cysteine 16, cysteine 9-cysteine 19, and cysteine 15-cysteine 26. Residue tyrosine 27 is modified to Tyrosine amide.

Expressed by the venom duct.

The protein resides in the secreted. Functionally, 1 uM of this toxin does not show any effect on voltage-gated sodium and potassium channels. Does not show antibacterial activity on both Gram-negative and Gram-positive bacteria. This chain is Conotoxin Lo6/7b, found in Conasprella longurionis (Cone snail).